Here is a 256-residue protein sequence, read N- to C-terminus: Imidazole glycerol phosphate synthase subunit HisF (256 aa).

Residues aspartate 13 and aspartate 132 contribute to the active site.

It belongs to the HisA/HisF family. Heterodimer of HisH and HisF.

The protein localises to the cytoplasm. It catalyses the reaction 5-[(5-phospho-1-deoxy-D-ribulos-1-ylimino)methylamino]-1-(5-phospho-beta-D-ribosyl)imidazole-4-carboxamide + L-glutamine = D-erythro-1-(imidazol-4-yl)glycerol 3-phosphate + 5-amino-1-(5-phospho-beta-D-ribosyl)imidazole-4-carboxamide + L-glutamate + H(+). The protein operates within amino-acid biosynthesis; L-histidine biosynthesis; L-histidine from 5-phospho-alpha-D-ribose 1-diphosphate: step 5/9. Functionally, IGPS catalyzes the conversion of PRFAR and glutamine to IGP, AICAR and glutamate. The HisF subunit catalyzes the cyclization activity that produces IGP and AICAR from PRFAR using the ammonia provided by the HisH subunit. The polypeptide is Imidazole glycerol phosphate synthase subunit HisF (Leptospira interrogans serogroup Icterohaemorrhagiae serovar copenhageni (strain Fiocruz L1-130)).